The following is a 357-amino-acid chain: Histidinol-phosphate aminotransferase (357 aa).

Residue Lys-221 is modified to N6-(pyridoxal phosphate)lysine.

Belongs to the class-II pyridoxal-phosphate-dependent aminotransferase family. Histidinol-phosphate aminotransferase subfamily. It depends on pyridoxal 5'-phosphate as a cofactor.

The catalysed reaction is L-histidinol phosphate + 2-oxoglutarate = 3-(imidazol-4-yl)-2-oxopropyl phosphate + L-glutamate. Its pathway is amino-acid biosynthesis; L-histidine biosynthesis; L-histidine from 5-phospho-alpha-D-ribose 1-diphosphate: step 7/9. The chain is Histidinol-phosphate aminotransferase (hisC) from Sulfurisphaera tokodaii (strain DSM 16993 / JCM 10545 / NBRC 100140 / 7) (Sulfolobus tokodaii).